A 344-amino-acid polypeptide reads, in one-letter code: Methionine import ATP-binding protein MetN (344 aa).

The 240-residue stretch at 2–241 folds into the ABC transporter domain; the sequence is IELQGLSQRF…PQHDVTRAMI (240 aa). An ATP-binding site is contributed by 38–45; that stretch reads GRSGAGKS.

The protein belongs to the ABC transporter superfamily. Methionine importer (TC 3.A.1.24) family. In terms of assembly, the complex is composed of two ATP-binding proteins (MetN), two transmembrane proteins (MetI) and a solute-binding protein (MetQ).

It localises to the cell inner membrane. It carries out the reaction L-methionine(out) + ATP + H2O = L-methionine(in) + ADP + phosphate + H(+). The enzyme catalyses D-methionine(out) + ATP + H2O = D-methionine(in) + ADP + phosphate + H(+). Its function is as follows. Part of the ABC transporter complex MetNIQ involved in methionine import. Responsible for energy coupling to the transport system. This chain is Methionine import ATP-binding protein MetN, found in Cupriavidus necator (strain ATCC 17699 / DSM 428 / KCTC 22496 / NCIMB 10442 / H16 / Stanier 337) (Ralstonia eutropha).